Reading from the N-terminus, the 801-residue chain is Phenylalanine--tRNA ligase beta subunit (801 aa).

The tRNA-binding domain occupies 39–153 (AEGLSKLVVG…DEAVPGDAIF (115 aa)). The region spanning 406–481 (TEPVEVSTNL…RIYGYDKLPT (76 aa)) is the B5 domain. Mg(2+)-binding residues include aspartate 459, aspartate 465, glutamate 468, and glutamate 469. The FDX-ACB domain maps to 708–801 (TKFPAMTRDI…LTEQVGAEVR (94 aa)).

The protein belongs to the phenylalanyl-tRNA synthetase beta subunit family. Type 1 subfamily. As to quaternary structure, tetramer of two alpha and two beta subunits. Requires Mg(2+) as cofactor.

Its subcellular location is the cytoplasm. The catalysed reaction is tRNA(Phe) + L-phenylalanine + ATP = L-phenylalanyl-tRNA(Phe) + AMP + diphosphate + H(+). This chain is Phenylalanine--tRNA ligase beta subunit, found in Streptococcus pyogenes serotype M3 (strain SSI-1).